We begin with the raw amino-acid sequence, 104 residues long: SOSS complex subunit C (104 aa).

An N-acetylalanine modification is found at Ala-2. Position 50 is a phosphoserine (Ser-50).

This sequence belongs to the SOSS-C family. In terms of assembly, component of the SOSS complex, composed of SOSS-B (SOSS-B1/NABP2 or SOSS-B2/NABP1), SOSS-A/INTS3 and SOSS-C/INIP. SOSS complexes containing SOSS-B1/NABP2 are more abundant than complexes containing SOSS-B2/NABP1. Interacts with INTS3; the interaction is direct.

The protein resides in the nucleus. Functionally, component of the SOSS complex, a multiprotein complex that functions downstream of the MRN complex to promote DNA repair and G2/M checkpoint. The SOSS complex associates with single-stranded DNA at DNA lesions and influences diverse endpoints in the cellular DNA damage response including cell-cycle checkpoint activation, recombinational repair and maintenance of genomic stability. Required for efficient homologous recombination-dependent repair of double-strand breaks (DSBs) and ATM-dependent signaling pathways. This is SOSS complex subunit C (INIP) from Homo sapiens (Human).